Here is a 113-residue protein sequence, read N- to C-terminus: Large ribosomal subunit protein uL22 (113 aa).

The protein belongs to the universal ribosomal protein uL22 family. Part of the 50S ribosomal subunit.

This protein binds specifically to 23S rRNA; its binding is stimulated by other ribosomal proteins, e.g. L4, L17, and L20. It is important during the early stages of 50S assembly. It makes multiple contacts with different domains of the 23S rRNA in the assembled 50S subunit and ribosome. Functionally, the globular domain of the protein is located near the polypeptide exit tunnel on the outside of the subunit, while an extended beta-hairpin is found that lines the wall of the exit tunnel in the center of the 70S ribosome. This chain is Large ribosomal subunit protein uL22, found in Magnetococcus marinus (strain ATCC BAA-1437 / JCM 17883 / MC-1).